The sequence spans 156 residues: Small ribosomal subunit protein bS18c (156 aa).

A disordered region spans residues 1-54 (MYTSKQPFLKSKQPFRKSKQPFRKSKQPFRKFKKPFRKSKQPFRRRPRIGPGDR). Positions 13-48 (QPFRKSKQPFRKSKQPFRKFKKPFRKSKQPFRRRPR) are enriched in basic residues.

This sequence belongs to the bacterial ribosomal protein bS18 family. As to quaternary structure, part of the 30S ribosomal subunit.

The protein resides in the plastid. Its subcellular location is the chloroplast. The chain is Small ribosomal subunit protein bS18c from Lolium perenne (Perennial ryegrass).